The sequence spans 365 residues: tRNA/tmRNA (uracil-C(5))-methyltransferase (365 aa).

The S-adenosyl-L-methionine site is built by Gln-189, Tyr-217, Asn-222, Glu-238, and Asp-298. Cys-323 acts as the Nucleophile in catalysis. The Proton acceptor role is filled by Glu-357.

The protein belongs to the class I-like SAM-binding methyltransferase superfamily. RNA M5U methyltransferase family. TrmA subfamily.

It catalyses the reaction uridine(54) in tRNA + S-adenosyl-L-methionine = 5-methyluridine(54) in tRNA + S-adenosyl-L-homocysteine + H(+). The enzyme catalyses uridine(341) in tmRNA + S-adenosyl-L-methionine = 5-methyluridine(341) in tmRNA + S-adenosyl-L-homocysteine + H(+). Its function is as follows. Dual-specificity methyltransferase that catalyzes the formation of 5-methyluridine at position 54 (m5U54) in all tRNAs, and that of position 341 (m5U341) in tmRNA (transfer-mRNA). This Shewanella pealeana (strain ATCC 700345 / ANG-SQ1) protein is tRNA/tmRNA (uracil-C(5))-methyltransferase.